The primary structure comprises 412 residues: Thyroxine-binding globulin (412 aa).

Positions 1–16 are cleaved as a signal peptide; that stretch reads MPLFLYMVLLVLGIHC. Residues Asn-20, Asn-35, Asn-98, Asn-164, and Asn-252 are each glycosylated (N-linked (GlcNAc...) asparagine). The thyroxine site is built by Asn-292 and Lys-395.

The protein belongs to the serpin family. In terms of tissue distribution, expressed by the liver and secreted in plasma.

Its subcellular location is the secreted. Functionally, major thyroid hormone transport protein in serum. This Sus scrofa (Pig) protein is Thyroxine-binding globulin (SERPINA7).